The following is an 807-amino-acid chain: uncharacterized protein (807 aa).

Residues 281-566 enclose the Reverse transcriptase domain; the sequence is IIQSLKSEEF…DKILFLGTNI (286 aa).

The protein resides in the mitochondrion. This is an uncharacterized protein from Schizosaccharomyces pombe (strain 972 / ATCC 24843) (Fission yeast).